We begin with the raw amino-acid sequence, 141 residues long: Endoribonuclease YbeY (141 aa).

Zn(2+) is bound by residues histidine 101, histidine 105, and histidine 111.

Belongs to the endoribonuclease YbeY family. Zn(2+) serves as cofactor.

It is found in the cytoplasm. Functionally, single strand-specific metallo-endoribonuclease involved in late-stage 70S ribosome quality control and in maturation of the 3' terminus of the 16S rRNA. This chain is Endoribonuclease YbeY, found in Nitrosomonas eutropha (strain DSM 101675 / C91 / Nm57).